The chain runs to 448 residues: Signal recognition particle protein (448 aa).

Residues 101–108 (GLQGSGKT), 182–186 (DSAGR), and 240–243 (SKFD) each bind GTP.

Belongs to the GTP-binding SRP family. SRP54 subfamily. As to quaternary structure, part of the signal recognition particle protein translocation system, which is composed of SRP and FtsY. SRP is a ribonucleoprotein composed of Ffh and a 4.5S RNA molecule.

It is found in the cytoplasm. It catalyses the reaction GTP + H2O = GDP + phosphate + H(+). Involved in targeting and insertion of nascent membrane proteins into the cytoplasmic membrane. Binds to the hydrophobic signal sequence of the ribosome-nascent chain (RNC) as it emerges from the ribosomes. The SRP-RNC complex is then targeted to the cytoplasmic membrane where it interacts with the SRP receptor FtsY. Interaction with FtsY leads to the transfer of the RNC complex to the Sec translocase for insertion into the membrane, the hydrolysis of GTP by both Ffh and FtsY, and the dissociation of the SRP-FtsY complex into the individual components. The protein is Signal recognition particle protein of Helicobacter pylori (strain ATCC 700392 / 26695) (Campylobacter pylori).